The primary structure comprises 458 residues: RuvB-like helicase 1 (458 aa).

71–78 is a binding site for ATP; sequence GGPGTGKT.

The protein belongs to the RuvB family. In terms of assembly, may form heterododecamers with RVB2. Component of the SWR1 chromatin remodeling complex, the INO80 chromatin remodeling complex, and of the R2TP complex.

The protein localises to the nucleus. It catalyses the reaction ATP + H2O = ADP + phosphate + H(+). Its function is as follows. DNA helicase which participates in several chromatin remodeling complexes, including the SWR1 and the INO80 complexes. The SWR1 complex mediates the ATP-dependent exchange of histone H2A for the H2A variant HZT1 leading to transcriptional regulation of selected genes by chromatin remodeling. The INO80 complex remodels chromatin by shifting nucleosomes and is involved in DNA repair. Also involved in pre-rRNA processing. In Gibberella zeae (strain ATCC MYA-4620 / CBS 123657 / FGSC 9075 / NRRL 31084 / PH-1) (Wheat head blight fungus), this protein is RuvB-like helicase 1 (RVB1).